The sequence spans 337 residues: 4-hydroxy-3-methylbut-2-enyl diphosphate reductase (337 aa).

Cys38 lines the [4Fe-4S] cluster pocket. (2E)-4-hydroxy-3-methylbut-2-enyl diphosphate-binding residues include His67 and His100. Residues His67 and His100 each coordinate dimethylallyl diphosphate. 2 residues coordinate isopentenyl diphosphate: His67 and His100. Position 122 (Cys122) interacts with [4Fe-4S] cluster. Position 150 (His150) interacts with (2E)-4-hydroxy-3-methylbut-2-enyl diphosphate. His150 lines the dimethylallyl diphosphate pocket. Isopentenyl diphosphate is bound at residue His150. The active-site Proton donor is Glu152. Thr190 provides a ligand contact to (2E)-4-hydroxy-3-methylbut-2-enyl diphosphate. Cys220 lines the [4Fe-4S] cluster pocket. Residues Ser248, Ser249, Asn250, and Ser293 each contribute to the (2E)-4-hydroxy-3-methylbut-2-enyl diphosphate site. Dimethylallyl diphosphate contacts are provided by Ser248, Ser249, Asn250, and Ser293. Positions 248, 249, 250, and 293 each coordinate isopentenyl diphosphate.

Belongs to the IspH family. [4Fe-4S] cluster serves as cofactor.

The enzyme catalyses isopentenyl diphosphate + 2 oxidized [2Fe-2S]-[ferredoxin] + H2O = (2E)-4-hydroxy-3-methylbut-2-enyl diphosphate + 2 reduced [2Fe-2S]-[ferredoxin] + 2 H(+). It catalyses the reaction dimethylallyl diphosphate + 2 oxidized [2Fe-2S]-[ferredoxin] + H2O = (2E)-4-hydroxy-3-methylbut-2-enyl diphosphate + 2 reduced [2Fe-2S]-[ferredoxin] + 2 H(+). It participates in isoprenoid biosynthesis; dimethylallyl diphosphate biosynthesis; dimethylallyl diphosphate from (2E)-4-hydroxy-3-methylbutenyl diphosphate: step 1/1. It functions in the pathway isoprenoid biosynthesis; isopentenyl diphosphate biosynthesis via DXP pathway; isopentenyl diphosphate from 1-deoxy-D-xylulose 5-phosphate: step 6/6. Its function is as follows. Catalyzes the conversion of 1-hydroxy-2-methyl-2-(E)-butenyl 4-diphosphate (HMBPP) into a mixture of isopentenyl diphosphate (IPP) and dimethylallyl diphosphate (DMAPP). Acts in the terminal step of the DOXP/MEP pathway for isoprenoid precursor biosynthesis. The protein is 4-hydroxy-3-methylbut-2-enyl diphosphate reductase of Mycolicibacterium vanbaalenii (strain DSM 7251 / JCM 13017 / BCRC 16820 / KCTC 9966 / NRRL B-24157 / PYR-1) (Mycobacterium vanbaalenii).